Reading from the N-terminus, the 358-residue chain is Phospho-N-acetylmuramoyl-pentapeptide-transferase (358 aa).

10 consecutive transmembrane segments (helical) span residues 13–47 (LFIL…SIFI), 81–101 (MGGI…TINL), 106–126 (LILL…DDYL), 148–168 (ISII…LITI), 171–191 (SWAI…LVGI), 201–221 (LDGL…TEIL), 228–248 (LFVF…FLKY), 255–275 (IFMG…IALL), 278–298 (SIFT…SVII), and 336–356 (IVEN…VLKI).

This sequence belongs to the glycosyltransferase 4 family. MraY subfamily. The cofactor is Mg(2+).

The protein resides in the cell inner membrane. It carries out the reaction UDP-N-acetyl-alpha-D-muramoyl-L-alanyl-gamma-D-glutamyl-meso-2,6-diaminopimeloyl-D-alanyl-D-alanine + di-trans,octa-cis-undecaprenyl phosphate = di-trans,octa-cis-undecaprenyl diphospho-N-acetyl-alpha-D-muramoyl-L-alanyl-D-glutamyl-meso-2,6-diaminopimeloyl-D-alanyl-D-alanine + UMP. It functions in the pathway cell wall biogenesis; peptidoglycan biosynthesis. Functionally, catalyzes the initial step of the lipid cycle reactions in the biosynthesis of the cell wall peptidoglycan: transfers peptidoglycan precursor phospho-MurNAc-pentapeptide from UDP-MurNAc-pentapeptide onto the lipid carrier undecaprenyl phosphate, yielding undecaprenyl-pyrophosphoryl-MurNAc-pentapeptide, known as lipid I. The protein is Phospho-N-acetylmuramoyl-pentapeptide-transferase of Prochlorococcus marinus (strain MIT 9301).